A 170-amino-acid polypeptide reads, in one-letter code: Transmembrane protein 252 (170 aa).

Transmembrane regions (helical) follow at residues isoleucine 8–isoleucine 28 and leucine 40–tryptophan 60. The interval cysteine 112–tyrosine 147 is disordered.

The protein localises to the membrane. This chain is Transmembrane protein 252 (TMEM252), found in Homo sapiens (Human).